Consider the following 133-residue polypeptide: Ribulose bisphosphate carboxylase small subunit (133 aa).

It belongs to the RuBisCO small chain family. As to quaternary structure, heterohexadecamer of 8 large and 8 small subunits.

RuBisCO catalyzes two reactions: the carboxylation of D-ribulose 1,5-bisphosphate, the primary event in carbon dioxide fixation, as well as the oxidative fragmentation of the pentose substrate. Both reactions occur simultaneously and in competition at the same active site. Although the small subunit is not catalytic it is essential for maximal activity. This is Ribulose bisphosphate carboxylase small subunit from Xanthobacter flavus.